Reading from the N-terminus, the 79-residue chain is UPF0154 protein Lm4b_01315 (79 aa).

A helical membrane pass occupies residues 2 to 22 (WIYILVGIICLLAGLAGGFFI). A compositionally biased stretch (polar residues) spans 57-66 (KINQMMSAMN). The interval 57 to 79 (KINQMMSAMNKQQEKEKPKKTKK) is disordered.

Belongs to the UPF0154 family.

It localises to the cell membrane. In Listeria monocytogenes serotype 4b (strain CLIP80459), this protein is UPF0154 protein Lm4b_01315.